An 84-amino-acid polypeptide reads, in one-letter code: Small ribosomal subunit protein uS17 (84 aa).

The protein belongs to the universal ribosomal protein uS17 family. Part of the 30S ribosomal subunit.

In terms of biological role, one of the primary rRNA binding proteins, it binds specifically to the 5'-end of 16S ribosomal RNA. This chain is Small ribosomal subunit protein uS17, found in Enterobacter sp. (strain 638).